A 652-amino-acid chain; its full sequence is DNA ligase (652 aa).

Residues 29–33 (DSDYD), 78–79 (SL), and E107 contribute to the NAD(+) site. Residue K109 is the N6-AMP-lysine intermediate of the active site. R130, E164, K278, and K302 together coordinate NAD(+). Zn(2+) contacts are provided by C395, C398, C413, and C418. The BRCT domain maps to 577 to 652 (NSDAALFGLT…IEDEDWLRQL (76 aa)).

This sequence belongs to the NAD-dependent DNA ligase family. LigA subfamily. Requires Mg(2+) as cofactor. It depends on Mn(2+) as a cofactor.

It carries out the reaction NAD(+) + (deoxyribonucleotide)n-3'-hydroxyl + 5'-phospho-(deoxyribonucleotide)m = (deoxyribonucleotide)n+m + AMP + beta-nicotinamide D-nucleotide.. Functionally, DNA ligase that catalyzes the formation of phosphodiester linkages between 5'-phosphoryl and 3'-hydroxyl groups in double-stranded DNA using NAD as a coenzyme and as the energy source for the reaction. It is essential for DNA replication and repair of damaged DNA. This Streptococcus pyogenes serotype M3 (strain ATCC BAA-595 / MGAS315) protein is DNA ligase.